A 153-amino-acid chain; its full sequence is Large ribosomal subunit protein bL9 (153 aa).

The protein belongs to the bacterial ribosomal protein bL9 family.

Its function is as follows. Binds to the 23S rRNA. This is Large ribosomal subunit protein bL9 from Micrococcus luteus (strain ATCC 4698 / DSM 20030 / JCM 1464 / CCM 169 / CCUG 5858 / IAM 1056 / NBRC 3333 / NCIMB 9278 / NCTC 2665 / VKM Ac-2230) (Micrococcus lysodeikticus).